Reading from the N-terminus, the 202-residue chain is Large ribosomal subunit protein bL25 (202 aa).

It belongs to the bacterial ribosomal protein bL25 family. CTC subfamily. As to quaternary structure, part of the 50S ribosomal subunit; part of the 5S rRNA/L5/L18/L25 subcomplex. Contacts the 5S rRNA. Binds to the 5S rRNA independently of L5 and L18.

Functionally, this is one of the proteins that binds to the 5S RNA in the ribosome where it forms part of the central protuberance. The chain is Large ribosomal subunit protein bL25 from Nitrosomonas eutropha (strain DSM 101675 / C91 / Nm57).